We begin with the raw amino-acid sequence, 447 residues long: Methylenetetrahydrofolate--tRNA-(uracil-5-)-methyltransferase TrmFO (447 aa).

13–18 (GAGLAG) is an FAD binding site.

Belongs to the MnmG family. TrmFO subfamily. FAD is required as a cofactor.

The protein resides in the cytoplasm. It carries out the reaction uridine(54) in tRNA + (6R)-5,10-methylene-5,6,7,8-tetrahydrofolate + NADH + H(+) = 5-methyluridine(54) in tRNA + (6S)-5,6,7,8-tetrahydrofolate + NAD(+). It catalyses the reaction uridine(54) in tRNA + (6R)-5,10-methylene-5,6,7,8-tetrahydrofolate + NADPH + H(+) = 5-methyluridine(54) in tRNA + (6S)-5,6,7,8-tetrahydrofolate + NADP(+). In terms of biological role, catalyzes the folate-dependent formation of 5-methyl-uridine at position 54 (M-5-U54) in all tRNAs. The polypeptide is Methylenetetrahydrofolate--tRNA-(uracil-5-)-methyltransferase TrmFO (Streptococcus thermophilus (strain ATCC BAA-250 / LMG 18311)).